A 165-amino-acid chain; its full sequence is Choriogonadotropin subunit beta 7 (165 aa).

Positions 1–20 (MEMFQGLLLLLLLSMGGTWA) are cleaved as a signal peptide. 6 disulfide bridges follow: C29-C77, C43-C92, C46-C130, C54-C108, C58-C110, and C113-C120. 2 N-linked (GlcNAc...) asparagine glycosylation sites follow: N33 and N50. The interval 131–165 (DDPRFQASSSSKAPPPSLPSPSRLPGPSDTPILPQ) is disordered. Residues S141, S147, S152, and S158 are each glycosylated (O-linked (GalNAc...) serine). Residues 143–154 (APPPSLPSPSRL) show a composition bias toward pro residues.

This sequence belongs to the glycoprotein hormones subunit beta family. Heterodimer of a common alpha chain identical in LH, FSH, TSH and HCG and a unique beta chain distinct in each of the hormones and confers receptor and biological specificity. High expression in the placenta throughout pregnancy.

It localises to the secreted. Its function is as follows. Beta subunit of the human chorionic gonadotropin (hCG). hCG is a complex glycoprotein composed of two glycosylated subunits alpha and beta which are non-covalently associated. The alpha subunit is identical to those in the pituitary gonadotropin hormones (LH, FSH and TSH). The beta subunits are distinct in each of the hormones and confer receptor and biological specificity. Has an essential role for pregnancy and maternal adaptation. Stimulates the ovaries to synthesize the steroids that are essential for the maintenance of pregnancy. The sequence is that of Choriogonadotropin subunit beta 7 from Homo sapiens (Human).